Here is a 195-residue protein sequence, read N- to C-terminus: Thymidylate kinase (195 aa).

Residue 7–14 (GVDTCGKS) coordinates ATP.

The protein belongs to the thymidylate kinase family.

It carries out the reaction dTMP + ATP = dTDP + ADP. Its function is as follows. Phosphorylation of dTMP to form dTDP in both de novo and salvage pathways of dTTP synthesis. This chain is Thymidylate kinase, found in Helicobacter hepaticus (strain ATCC 51449 / 3B1).